We begin with the raw amino-acid sequence, 115 residues long: Large ribosomal subunit protein bL19 (115 aa).

The protein belongs to the bacterial ribosomal protein bL19 family.

This protein is located at the 30S-50S ribosomal subunit interface and may play a role in the structure and function of the aminoacyl-tRNA binding site. In Streptococcus pyogenes serotype M2 (strain MGAS10270), this protein is Large ribosomal subunit protein bL19.